A 131-amino-acid polypeptide reads, in one-letter code: MELEYPEDLRYLETHEYVRLEGEIATLGISAFAVDQLGDIVFLELPELGEALKVGSSFGTIESVKAVEDLYPPVSGTVVDRNQAMIDSPELIADDPHGEGWLLKVRVENPDTALADTLSASEYRTQVAGES.

A Lipoyl-binding domain is found at 24–106 (IATLGISAFA…HGEGWLLKVR (83 aa)). At lysine 65 the chain carries N6-lipoyllysine.

It belongs to the GcvH family. In terms of assembly, the glycine cleavage system is composed of four proteins: P, T, L and H. It depends on (R)-lipoate as a cofactor.

The glycine cleavage system catalyzes the degradation of glycine. The H protein shuttles the methylamine group of glycine from the P protein to the T protein. The chain is Glycine cleavage system H protein from Microcystis aeruginosa (strain NIES-843 / IAM M-2473).